Reading from the N-terminus, the 745-residue chain is Polyribonucleotide nucleotidyltransferase (745 aa).

Mg(2+) is bound by residues Asp-487 and Asp-493. Positions 554 to 613 (PRIETMQIPTDKIRDVIGTGGKIIREIVEKTGAKINIEDTGVVKIASSDGKAIKAAYNWI) constitute a KH domain. Residues 623–691 (GTIYDGTIVK…ERGKIRLSMK (69 aa)) enclose the S1 motif domain. The interval 695-745 (QETGEDITEKLKAERAERGEPEREERSDRGDRGDRGPRRDRGERRRESSGE) is disordered. Basic and acidic residues predominate over residues 701-745 (ITEKLKAERAERGEPEREERSDRGDRGDRGPRRDRGERRRESSGE).

This sequence belongs to the polyribonucleotide nucleotidyltransferase family. It depends on Mg(2+) as a cofactor.

It localises to the cytoplasm. The enzyme catalyses RNA(n+1) + phosphate = RNA(n) + a ribonucleoside 5'-diphosphate. Involved in mRNA degradation. Catalyzes the phosphorolysis of single-stranded polyribonucleotides processively in the 3'- to 5'-direction. This is Polyribonucleotide nucleotidyltransferase from Methylorubrum populi (strain ATCC BAA-705 / NCIMB 13946 / BJ001) (Methylobacterium populi).